We begin with the raw amino-acid sequence, 181 residues long: MSVEVANETEWQLDPKVFSELGLWVMHQMRVSTQSELTITFVDPEPIAELHERWMDLQGPTDVMSFPMDELRPGDERNEPEGMLGDIVICPWVAQQQAQAAGHSTMEEMMLLTIHGVLHLLGYDHHTREQERQMFGLQRQLLLTFFALHHGTAWSATLPSGSVNELEVYERKYGTNRELGH.

Positions 115, 119, and 125 each coordinate Zn(2+).

This sequence belongs to the endoribonuclease YbeY family. It depends on Zn(2+) as a cofactor.

The protein resides in the cytoplasm. In terms of biological role, single strand-specific metallo-endoribonuclease involved in late-stage 70S ribosome quality control and in maturation of the 3' terminus of the 16S rRNA. The protein is Endoribonuclease YbeY of Bifidobacterium animalis subsp. lactis (strain AD011).